The primary structure comprises 289 residues: Shikimate dehydrogenase (NADP(+)) (289 aa).

Residues 19–21 (SLS) and T66 each bind shikimate. The Proton acceptor role is filled by K70. Shikimate contacts are provided by N91 and D106. Residues 131–135 (GNGGA) and L229 contribute to the NADP(+) site. Residue Y231 participates in shikimate binding. G252 contacts NADP(+).

It belongs to the shikimate dehydrogenase family. As to quaternary structure, homodimer.

The enzyme catalyses shikimate + NADP(+) = 3-dehydroshikimate + NADPH + H(+). It participates in metabolic intermediate biosynthesis; chorismate biosynthesis; chorismate from D-erythrose 4-phosphate and phosphoenolpyruvate: step 4/7. Its function is as follows. Involved in the biosynthesis of the chorismate, which leads to the biosynthesis of aromatic amino acids. Catalyzes the reversible NADPH linked reduction of 3-dehydroshikimate (DHSA) to yield shikimate (SA). The polypeptide is Shikimate dehydrogenase (NADP(+)) (Nostoc sp. (strain PCC 7120 / SAG 25.82 / UTEX 2576)).